Reading from the N-terminus, the 349-residue chain is 4-hydroxythreonine-4-phosphate dehydrogenase (349 aa).

A substrate-binding site is contributed by T136. The a divalent metal cation site is built by H171, H216, and H281. 3 residues coordinate substrate: K289, N298, and R307.

Belongs to the PdxA family. Homodimer. A divalent metal cation serves as cofactor.

Its subcellular location is the cytoplasm. The catalysed reaction is 4-(phosphooxy)-L-threonine + NAD(+) = 3-amino-2-oxopropyl phosphate + CO2 + NADH. It participates in cofactor biosynthesis; pyridoxine 5'-phosphate biosynthesis; pyridoxine 5'-phosphate from D-erythrose 4-phosphate: step 4/5. In terms of biological role, catalyzes the NAD(P)-dependent oxidation of 4-(phosphooxy)-L-threonine (HTP) into 2-amino-3-oxo-4-(phosphooxy)butyric acid which spontaneously decarboxylates to form 3-amino-2-oxopropyl phosphate (AHAP). In Synechocystis sp. (strain ATCC 27184 / PCC 6803 / Kazusa), this protein is 4-hydroxythreonine-4-phosphate dehydrogenase.